Here is a 131-residue protein sequence, read N- to C-terminus: Glycine cleavage system H protein (131 aa).

A Lipoyl-binding domain is found at 24–106 (VYCVGITEHA…YTDGWLFKIK (83 aa)). The residue at position 65 (Lys65) is an N6-lipoyllysine.

This sequence belongs to the GcvH family. In terms of assembly, the glycine cleavage system is composed of four proteins: P, T, L and H. (R)-lipoate is required as a cofactor.

The glycine cleavage system catalyzes the degradation of glycine. The H protein shuttles the methylamine group of glycine from the P protein to the T protein. This is Glycine cleavage system H protein from Sodalis glossinidius (strain morsitans).